A 690-amino-acid polypeptide reads, in one-letter code: Iron-regulated transcriptional activator AFT1 (690 aa).

Positions Met-1–His-21 are disordered. Asp-110 is a Zn(2+) binding site. DNA contacts are provided by Lys-111, Lys-115, Ile-131, Glu-132, Arg-133, Ser-134, Asp-135, and Lys-138. Residue Cys-143 coordinates Zn(2+). The span at Arg-148–Lys-159 shows a compositional bias: basic residues. Residues Arg-148 to Lys-205 are disordered. Basic and acidic residues predominate over residues Pro-160 to Asp-174. Over residues Ser-181–Ile-201 the composition is skewed to polar residues. A Zn(2+)-binding site is contributed by Cys-215. Position 226 (Lys-226) interacts with DNA. The Zn(2+) site is built by His-239 and His-241. Position 263 (Asn-263) interacts with DNA. The short motif at Cys-291–Cys-293 is the CDC [2Fe-2S] cluster binding motif element. Disordered stretches follow at residues Pro-335 to Gln-357 and Ser-612 to Asp-655. The span at Ser-339–Val-351 shows a compositional bias: polar residues. A compositionally biased stretch (low complexity) spans His-621 to Asn-638. The segment covering Gln-639–His-649 has biased composition (basic and acidic residues).

Homodimer. Dimerization decreases the DNA-binding activity.

The protein resides in the nucleus. Its activity is regulated as follows. Dimerization via the binding of Fe(2+) or a [2Fe-2S] cluster decreases the DNA-binding activity. Transcription factor that activates the genes for FRE1, FRE2 and FET3 in response to iron deprivationand thereby plays a central role in iron homeostasis. Also required for the expression of LSO1. Recognizes the consensus iron-responsive element (Fe-RE) sequence 5'-CACCC-3' in the promoters of target genes. Iron could interact directly with AFT1 and inhibits its activity. In high iron condition, the presence of Fe(2+) or [2Fe-2S] cluster leads to dimerization, which in turn leads to a decrease in DNA affinity. The polypeptide is Iron-regulated transcriptional activator AFT1 (Saccharomyces cerevisiae (strain ATCC 204508 / S288c) (Baker's yeast)).